Reading from the N-terminus, the 154-residue chain is UPF0178 protein BAV3236 (154 aa).

Belongs to the UPF0178 family.

The sequence is that of UPF0178 protein BAV3236 from Bordetella avium (strain 197N).